We begin with the raw amino-acid sequence, 747 residues long: MTSQSLRDQAATFGLTTEEYDLFVSQLGREPNALEAAIVGAMWSEHCGYKNSRPLFRAFPTTGPQVLQGPGENAGVVDIGDGWGVAFKMESHNHPSAVEPVQGAATGVGGILRDIFAMGARPFAVLDSLRFGNPDSPRTRFLVNGVVDGIAHYGNAIGVPTVGGEVTFHPSYQENPLVNVMALGLLRHEDLATGTMGEVGNQIVYVGSKTGRDGLGGAVFSSADLSAASQADRPAVQVGDPFMEKLLLEATLEAIQAGLVAGVQDMGAAGLVSSTCEMAYRASLGITMDLDKVPTREEGMVPMELCLSESQERMILVPVPGKEQALHDLLAKWELDVVTIGEVEAHDRYRLTWKGEVVCDLPVALLNEAPKYTREGVESADIRAARERDLSGVPLPGDLGAVLLELLSHPTIASKRPIFERYDHQVMTNTVVVPGAADAAVLRVKGSPMGVAATSDCNPRFVQLDPYAGAAAAVAEAARNLACVGATPLAITDNLNFGNPHRPEVYYQLQQAVQGIADACRALNTPVTGGNVSLYNQYTEGDHKVAIHPTPTIGMVGVLPDVTVRASLNLKAAGQTLLLLGHRAEKGWSDSIGASQYLETVHGLEAGQVPPVDLDLAQKVVDGTLALIRAGLTDTAHDCAEGGLAVALAEMAIAGGLGLNVSLDAPASVRADALLFGEAHSRVIVAVEDAAAAGAKLDELGLPYAVLGETVEAPKVTIAAPAQHVHLSVNLESLKTAWEEPLKGILG.

The active site involves histidine 46. ATP contacts are provided by tyrosine 49 and lysine 88. Glutamate 90 serves as a coordination point for Mg(2+). Residues 91–94 (SHNH) and arginine 113 each bind substrate. Residue histidine 92 is the Proton acceptor of the active site. Mg(2+) is bound at residue aspartate 114. Glutamine 237 is a binding site for substrate. Aspartate 265 lines the Mg(2+) pocket. 309–311 (ESQ) serves as a coordination point for substrate. Residues aspartate 493 and glycine 530 each coordinate ATP. Asparagine 531 is a binding site for Mg(2+). Residue serine 533 participates in substrate binding.

Belongs to the FGAMS family. In terms of assembly, monomer. Part of the FGAM synthase complex composed of 1 PurL, 1 PurQ and 2 PurS subunits.

The protein resides in the cytoplasm. The enzyme catalyses N(2)-formyl-N(1)-(5-phospho-beta-D-ribosyl)glycinamide + L-glutamine + ATP + H2O = 2-formamido-N(1)-(5-O-phospho-beta-D-ribosyl)acetamidine + L-glutamate + ADP + phosphate + H(+). Its pathway is purine metabolism; IMP biosynthesis via de novo pathway; 5-amino-1-(5-phospho-D-ribosyl)imidazole from N(2)-formyl-N(1)-(5-phospho-D-ribosyl)glycinamide: step 1/2. Part of the phosphoribosylformylglycinamidine synthase complex involved in the purines biosynthetic pathway. Catalyzes the ATP-dependent conversion of formylglycinamide ribonucleotide (FGAR) and glutamine to yield formylglycinamidine ribonucleotide (FGAM) and glutamate. The FGAM synthase complex is composed of three subunits. PurQ produces an ammonia molecule by converting glutamine to glutamate. PurL transfers the ammonia molecule to FGAR to form FGAM in an ATP-dependent manner. PurS interacts with PurQ and PurL and is thought to assist in the transfer of the ammonia molecule from PurQ to PurL. The sequence is that of Phosphoribosylformylglycinamidine synthase subunit PurL from Deinococcus radiodurans (strain ATCC 13939 / DSM 20539 / JCM 16871 / CCUG 27074 / LMG 4051 / NBRC 15346 / NCIMB 9279 / VKM B-1422 / R1).